The sequence spans 554 residues: DNA ligase (554 aa).

An ATP-binding site is contributed by E253. K255 acts as the N6-AMP-lysine intermediate in catalysis. 6 residues coordinate ATP: R260, R275, E304, F344, R418, and K424.

Belongs to the ATP-dependent DNA ligase family. The cofactor is Mg(2+).

It catalyses the reaction ATP + (deoxyribonucleotide)n-3'-hydroxyl + 5'-phospho-(deoxyribonucleotide)m = (deoxyribonucleotide)n+m + AMP + diphosphate.. Functionally, DNA ligase that seals nicks in double-stranded DNA during DNA replication, DNA recombination and DNA repair. This is DNA ligase from Haloarcula marismortui (strain ATCC 43049 / DSM 3752 / JCM 8966 / VKM B-1809) (Halobacterium marismortui).